A 463-amino-acid chain; its full sequence is Interferon-inducible GTPase 5 (463 aa).

The region spanning 52–234 (TRLEVGVTGE…PMLVTTWEHD (183 aa)) is the IRG-type G domain. Residues 61–68 (ESGAGKSS), 86–90 (TGVVE), 168–170 (KVD), and 215–217 (SNL) each bind GTP. 2 positions are modified to phosphoserine: S246 and S303. The tract at residues 409–438 (QGEVSLEAAGDNAVEKRSSGEGTSEEAPLS) is disordered.

The protein belongs to the TRAFAC class dynamin-like GTPase superfamily. IRG family.

The protein localises to the cell projection. It localises to the cilium. The protein resides in the flagellum. It is found in the lipid droplet. It carries out the reaction GTP + H2O = GDP + phosphate + H(+). Its function is as follows. Required for sperm motility and therefore male fertility, via positive regulation of spermatozoa fibrous sheath formation. This chain is Interferon-inducible GTPase 5 (Irgc), found in Rattus norvegicus (Rat).